Consider the following 58-residue polypeptide: Large ribosomal subunit protein uL30 (58 aa).

The protein belongs to the universal ribosomal protein uL30 family. Part of the 50S ribosomal subunit.

This is Large ribosomal subunit protein uL30 from Pseudomonas putida (strain W619).